The chain runs to 179 residues: Bifunctional protein PyrR (179 aa).

The PRPP-binding motif lies at 100–112; sequence VILVDDVLFTGRT.

The protein belongs to the purine/pyrimidine phosphoribosyltransferase family. PyrR subfamily.

It carries out the reaction UMP + diphosphate = 5-phospho-alpha-D-ribose 1-diphosphate + uracil. Regulates the transcription of the pyrimidine nucleotide (pyr) operon in response to exogenous pyrimidines. In terms of biological role, also displays a weak uracil phosphoribosyltransferase activity which is not physiologically significant. In Actinobacillus succinogenes (strain ATCC 55618 / DSM 22257 / CCUG 43843 / 130Z), this protein is Bifunctional protein PyrR.